Here is a 123-residue protein sequence, read N- to C-terminus: Small ribosomal subunit protein uS13c (123 aa).

Positions 99-123 (GQRTRSNARTRRGAKKTVAGKKLAK) are disordered. Basic residues predominate over residues 100–123 (QRTRSNARTRRGAKKTVAGKKLAK).

The protein belongs to the universal ribosomal protein uS13 family. Part of the 30S ribosomal subunit.

The protein localises to the plastid. It localises to the chloroplast. Its function is as follows. Located at the top of the head of the 30S subunit, it contacts several helices of the 16S rRNA. The chain is Small ribosomal subunit protein uS13c from Cyanidioschyzon merolae (strain NIES-3377 / 10D) (Unicellular red alga).